A 154-amino-acid chain; its full sequence is 3-hydroxyacyl-[acyl-carrier-protein] dehydratase FabZ (154 aa).

Residue H54 is part of the active site.

The protein belongs to the thioester dehydratase family. FabZ subfamily.

It is found in the cytoplasm. The enzyme catalyses a (3R)-hydroxyacyl-[ACP] = a (2E)-enoyl-[ACP] + H2O. In terms of biological role, involved in unsaturated fatty acids biosynthesis. Catalyzes the dehydration of short chain beta-hydroxyacyl-ACPs and long chain saturated and unsaturated beta-hydroxyacyl-ACPs. The polypeptide is 3-hydroxyacyl-[acyl-carrier-protein] dehydratase FabZ (Shewanella oneidensis (strain ATCC 700550 / JCM 31522 / CIP 106686 / LMG 19005 / NCIMB 14063 / MR-1)).